The following is a 909-amino-acid chain: Aconitate hydratase A (909 aa).

Residues Cys450, Cys516, and Cys519 each contribute to the [4Fe-4S] cluster site.

It belongs to the aconitase/IPM isomerase family. As to quaternary structure, monomer. [4Fe-4S] cluster is required as a cofactor.

It carries out the reaction citrate = D-threo-isocitrate. The enzyme catalyses 3-hydroxybutane-1,2,3-tricarboxylate = 2-methyl-cis-aconitate + H2O. It functions in the pathway carbohydrate metabolism; tricarboxylic acid cycle; isocitrate from oxaloacetate: step 2/2. In terms of biological role, involved in both the tricarboxylic acid (TCA) and methylcitric acid cycles. Catalyzes the reversible isomerization of citrate to isocitrate via cis-aconitate. Also catalyzes the rehydration of 2-methyl-cis-aconitate to produce 2-methylisocitrate. The apo form of AcnA functions as a RNA-binding regulatory protein which plays a role in the regulation of citrate concentration and in the sporulation. To prevent the accumulation of excessive levels of citrate, it binds near the 5' end of the citZ mRNA, decreasing its stability and thereby limiting the concentration of citrate synthase in the cell. Aconitase also binds to the gerE transcript late in sporulation and stabilizes it for translation, thereby increasing the rate and level of GerE protein accumulation. The protein is Aconitate hydratase A (citB) of Bacillus subtilis (strain 168).